The following is a 706-amino-acid chain: Amino-acid acetyltransferase, mitochondrial (706 aa).

Disordered regions lie at residues 1-25 (MSSR…GAGD) and 367-403 (NPAN…PAKQ). A mitochondrion-targeting transit peptide spans 1-35 (MSSRVLASRAAQPLKRHPTVVGAGDEAYPTPRRCF). Polar residues predominate over residues 367-388 (NPANNSQGESVVTNPISDSNAV). Low complexity predominate over residues 389 to 401 (SESASTEPTSTPA). One can recognise an N-acetyltransferase domain in the interval 527-696 (TRPNMNLDDP…YEAVCRSIQP (170 aa)).

This sequence belongs to the acetyltransferase family.

It localises to the mitochondrion. The enzyme catalyses L-glutamate + acetyl-CoA = N-acetyl-L-glutamate + CoA + H(+). The protein operates within amino-acid biosynthesis; L-arginine biosynthesis; N(2)-acetyl-L-ornithine from L-glutamate: step 1/4. In terms of biological role, N-acetylglutamate synthase involved in arginine biosynthesis. The chain is Amino-acid acetyltransferase, mitochondrial (arg2) from Emericella nidulans (strain FGSC A4 / ATCC 38163 / CBS 112.46 / NRRL 194 / M139) (Aspergillus nidulans).